Here is a 322-residue protein sequence, read N- to C-terminus: Transmembrane protein 171 (322 aa).

4 helical membrane-spanning segments follow: residues 22 to 42 (IFFLFVFGAALLCVGVLLSIF), 57 to 77 (IVLKIAGPSCAVVGLGAVILA), 112 to 132 (LIFGFLFLTSGMLISILGIWV), and 159 to 179 (FLSLQIMGPLVVLVGLCFFVV). Residues 223 to 322 (PPPYFPESSA…LGAPSDASPP (100 aa)) are disordered. The span at 228-241 (PESSAAAPSPGANS) shows a compositional bias: low complexity. Polar residues-rich tracts occupy residues 242–267 (LHQIENPPSYSSLFNYGTPTPENQGA) and 279–289 (ISGQGSSSERS).

The protein localises to the membrane. This is Transmembrane protein 171 (Tmem171) from Mus musculus (Mouse).